The primary structure comprises 180 residues: Adenine phosphoribosyltransferase (180 aa).

Residue Ala2 is modified to N-acetylalanine. A phosphoserine mark is found at Ser4, Ser15, and Ser30. Residue Tyr60 is modified to Phosphotyrosine. Ser66 carries the post-translational modification Phosphoserine. Lys114 is subject to N6-acetyllysine. The residue at position 135 (Thr135) is a Phosphothreonine.

This sequence belongs to the purine/pyrimidine phosphoribosyltransferase family. Homodimer.

Its subcellular location is the cytoplasm. It catalyses the reaction AMP + diphosphate = 5-phospho-alpha-D-ribose 1-diphosphate + adenine. It functions in the pathway purine metabolism; AMP biosynthesis via salvage pathway; AMP from adenine: step 1/1. Catalyzes a salvage reaction resulting in the formation of AMP, that is energically less costly than de novo synthesis. The chain is Adenine phosphoribosyltransferase from Cricetulus griseus (Chinese hamster).